The following is a 231-amino-acid chain: NADH-ubiquinone oxidoreductase chain 4 (231 aa).

6 consecutive transmembrane segments (helical) span residues P1–I21, M34–L54, I63–G85, A89–Y111, I128–P148, and T169–L189.

It belongs to the complex I subunit 4 family.

It localises to the mitochondrion membrane. It carries out the reaction a ubiquinone + NADH + 5 H(+)(in) = a ubiquinol + NAD(+) + 4 H(+)(out). In terms of biological role, core subunit of the mitochondrial membrane respiratory chain NADH dehydrogenase (Complex I) that is believed to belong to the minimal assembly required for catalysis. Complex I functions in the transfer of electrons from NADH to the respiratory chain. The immediate electron acceptor for the enzyme is believed to be ubiquinone. The protein is NADH-ubiquinone oxidoreductase chain 4 (MT-ND4) of Deinagkistrodon acutus (Hundred-pace snake).